A 277-amino-acid polypeptide reads, in one-letter code: MKGSIWTIGDVQGCCAPLAELLAHPEIAGDTDSRFWFAGDLVNRGPQSLAVLRRIMAMGERCTAVLGNHDLHLLAAYAGVRKPSKSDTLDEVLQAPDAVDLIDWLRFRPLAHYEAGHLMVHAGVLAKWDVAKTLALAGEVEQALRGPNWRKALQKMYGNEPATWKDDHTGGKRMRVIINALTRIRLCTPSGHMEFATKVAPGAWPAGLVPWFDVPNRATRDVTVVFGHWSTLGLLMRPDVICLDTGCVWGGALSALRLHDRKLVQVKCKRFQDPNGD.

This sequence belongs to the Ap4A hydrolase family.

The catalysed reaction is P(1),P(4)-bis(5'-adenosyl) tetraphosphate + H2O = 2 ADP + 2 H(+). Its function is as follows. Hydrolyzes diadenosine 5',5'''-P1,P4-tetraphosphate to yield ADP. The protein is Bis(5'-nucleosyl)-tetraphosphatase, symmetrical of Bordetella bronchiseptica (strain ATCC BAA-588 / NCTC 13252 / RB50) (Alcaligenes bronchisepticus).